An 854-amino-acid chain; its full sequence is Iron and copper transporter IacT (854 aa).

A TonB box motif is present at residues 187 to 194 (IELIVTAQ). The TBDR plug domain occupies 199–315 (DAQDVPLSLT…PAGVVNVISR (117 aa)). The TBDR beta-barrel domain maps to 320 to 854 (QPEMRISALY…TYGVRVSASF (535 aa)). The TonB C-terminal box signature appears at 839 to 854 (GFGDPVTYGVRVSASF).

This sequence belongs to the TonB-dependent receptor family.

The protein localises to the cell outer membrane. Involved in the TonB-dependent uptake of copper and iron under conditions in which the concentration of copper exceeds that of the iron. This chain is Iron and copper transporter IacT, found in Nostoc sp. (strain PCC 7120 / SAG 25.82 / UTEX 2576).